We begin with the raw amino-acid sequence, 596 residues long: Nodulation outer protein X (596 aa).

Its subcellular location is the secreted. The chain is Nodulation outer protein X (nopX) from Sinorhizobium fredii (strain NBRC 101917 / NGR234).